Here is a 279-residue protein sequence, read N- to C-terminus: tRNA-cytidine(32) 2-sulfurtransferase (279 aa).

The PP-loop motif motif lies at 46-51 (SGGKDS). [4Fe-4S] cluster contacts are provided by C121, C124, and C212.

The protein belongs to the TtcA family. Homodimer. The cofactor is Mg(2+). [4Fe-4S] cluster serves as cofactor.

It is found in the cytoplasm. It carries out the reaction cytidine(32) in tRNA + S-sulfanyl-L-cysteinyl-[cysteine desulfurase] + AH2 + ATP = 2-thiocytidine(32) in tRNA + L-cysteinyl-[cysteine desulfurase] + A + AMP + diphosphate + H(+). Its pathway is tRNA modification. Catalyzes the ATP-dependent 2-thiolation of cytidine in position 32 of tRNA, to form 2-thiocytidine (s(2)C32). The sulfur atoms are provided by the cysteine/cysteine desulfurase (IscS) system. The chain is tRNA-cytidine(32) 2-sulfurtransferase from Marinomonas sp. (strain MWYL1).